Here is a 179-residue protein sequence, read N- to C-terminus: Large ribosomal subunit protein uL5 (179 aa).

Belongs to the universal ribosomal protein uL5 family. In terms of assembly, part of the 50S ribosomal subunit; part of the 5S rRNA/L5/L18/L25 subcomplex. Contacts the 5S rRNA and the P site tRNA. Forms a bridge to the 30S subunit in the 70S ribosome.

Functionally, this is one of the proteins that bind and probably mediate the attachment of the 5S RNA into the large ribosomal subunit, where it forms part of the central protuberance. In the 70S ribosome it contacts protein S13 of the 30S subunit (bridge B1b), connecting the 2 subunits; this bridge is implicated in subunit movement. Contacts the P site tRNA; the 5S rRNA and some of its associated proteins might help stabilize positioning of ribosome-bound tRNAs. The protein is Large ribosomal subunit protein uL5 of Burkholderia multivorans (strain ATCC 17616 / 249).